A 294-amino-acid polypeptide reads, in one-letter code: NAD kinase (294 aa).

The active-site Proton acceptor is the Asp74. NAD(+)-binding positions include 74–75 (DG), Lys79, 149–150 (NE), Asp179, 190–195 (TGYSLS), and Ala214.

Belongs to the NAD kinase family. It depends on a divalent metal cation as a cofactor.

It localises to the cytoplasm. The enzyme catalyses NAD(+) + ATP = ADP + NADP(+) + H(+). In terms of biological role, involved in the regulation of the intracellular balance of NAD and NADP, and is a key enzyme in the biosynthesis of NADP. Catalyzes specifically the phosphorylation on 2'-hydroxyl of the adenosine moiety of NAD to yield NADP. The protein is NAD kinase of Christiangramia forsetii (strain DSM 17595 / CGMCC 1.15422 / KT0803) (Gramella forsetii).